Consider the following 280-residue polypeptide: Bis(5'-nucleosyl)-tetraphosphatase, symmetrical (280 aa).

It belongs to the Ap4A hydrolase family.

The catalysed reaction is P(1),P(4)-bis(5'-adenosyl) tetraphosphate + H2O = 2 ADP + 2 H(+). Hydrolyzes diadenosine 5',5'''-P1,P4-tetraphosphate to yield ADP. The chain is Bis(5'-nucleosyl)-tetraphosphatase, symmetrical from Shigella boydii serotype 18 (strain CDC 3083-94 / BS512).